The chain runs to 159 residues: MAKNKSSKSTSNTIALNKKARHEYFLHDKFEAGVELQGWEVKSIRAGKVNITETYIHLKNGEAFLLGAQIQPLNSASTHVICDPLRYRKLLLSRRELDRLVGATERDGYSLIATAMYWKNCWVKLEFHLAKGKKLHDKREDGKDKDWSREKERLMKHKA.

Over residues 138-153 (KREDGKDKDWSREKER) the composition is skewed to basic and acidic residues. Residues 138–159 (KREDGKDKDWSREKERLMKHKA) form a disordered region.

It belongs to the SmpB family.

Its subcellular location is the cytoplasm. Its function is as follows. Required for rescue of stalled ribosomes mediated by trans-translation. Binds to transfer-messenger RNA (tmRNA), required for stable association of tmRNA with ribosomes. tmRNA and SmpB together mimic tRNA shape, replacing the anticodon stem-loop with SmpB. tmRNA is encoded by the ssrA gene; the 2 termini fold to resemble tRNA(Ala) and it encodes a 'tag peptide', a short internal open reading frame. During trans-translation Ala-aminoacylated tmRNA acts like a tRNA, entering the A-site of stalled ribosomes, displacing the stalled mRNA. The ribosome then switches to translate the ORF on the tmRNA; the nascent peptide is terminated with the 'tag peptide' encoded by the tmRNA and targeted for degradation. The ribosome is freed to recommence translation, which seems to be the essential function of trans-translation. This is SsrA-binding protein from Pseudoalteromonas translucida (strain TAC 125).